The primary structure comprises 548 residues: Biotin-dependent acetyl-/propionyl-coenzyme A carboxylase beta5 subunit (548 aa).

Residues Met1–His23 form a disordered region. Over residues Arg7–Asp21 the composition is skewed to basic and acidic residues. The CoA carboxyltransferase N-terminal domain maps to Thr25–Gln281. The CoA carboxyltransferase C-terminal domain occupies Asp295 to Lys541.

This sequence belongs to the AccD/PCCB family. In terms of assembly, forms homohexamers. The biotin-dependent acyl-CoA carboxylase complex is composed of AccA3, which contains the biotin carboxylase (BC) and biotin carboxyl carrier protein (BCCP) domains, and AccD5, which contains the carboxyl transferase (CT) domain. The AccA3/AccD5 complex forms a dodecamer, and can associate with the epsilon subunit AccE5 (Rv3280), which stimulates carboxylation by the complex. Is also part of the long-chain acyl-CoA carboxylase (LCC) complex, which is composed of AccA3, AccD4, AccD5 and AccE5. The four subunits are essential for activity, but AccD5, together with AccE5, probably plays a structural role rather than a catalytic one.

It catalyses the reaction N(6)-carboxybiotinyl-L-lysyl-[protein] + acetyl-CoA = N(6)-biotinyl-L-lysyl-[protein] + malonyl-CoA. The catalysed reaction is N(6)-carboxybiotinyl-L-lysyl-[protein] + propanoyl-CoA = methylmalonyl-CoA + N(6)-biotinyl-L-lysyl-[protein]. It participates in lipid metabolism; mycolic acid biosynthesis. With respect to regulation, carboxylase activity of the AccA3/AccD5 complex is stimulated by interaction with AccE5. Functionally, component of a biotin-dependent acyl-CoA carboxylase complex. This subunit transfers the CO2 from carboxybiotin to the CoA ester substrate. When associated with the alpha3 subunit AccA3, is involved in the carboxylation of acetyl-CoA and propionyl-CoA, with a preference for propionyl-CoA. Is also required for the activity of the long-chain acyl-CoA carboxylase (LCC) complex. The chain is Biotin-dependent acetyl-/propionyl-coenzyme A carboxylase beta5 subunit from Mycobacterium tuberculosis (strain ATCC 25618 / H37Rv).